The primary structure comprises 292 residues: 33 kDa chaperonin (292 aa).

2 cysteine pairs are disulfide-bonded: Cys-230–Cys-232 and Cys-263–Cys-266.

This sequence belongs to the HSP33 family. In terms of processing, under oxidizing conditions two disulfide bonds are formed involving the reactive cysteines. Under reducing conditions zinc is bound to the reactive cysteines and the protein is inactive.

Its subcellular location is the cytoplasm. Its function is as follows. Redox regulated molecular chaperone. Protects both thermally unfolding and oxidatively damaged proteins from irreversible aggregation. Plays an important role in the bacterial defense system toward oxidative stress. The chain is 33 kDa chaperonin from Cronobacter sakazakii (strain ATCC BAA-894) (Enterobacter sakazakii).